The following is a 160-amino-acid chain: Nucleotide-binding protein CbuK_1936 (160 aa).

The protein belongs to the YajQ family.

Nucleotide-binding protein. In Coxiella burnetii (strain CbuK_Q154) (Coxiella burnetii (strain Q154)), this protein is Nucleotide-binding protein CbuK_1936.